Here is a 527-residue protein sequence, read N- to C-terminus: MNSSDFKKSFKESTENNSNTYRPSKTLNTYKSLKNGNNIANSLIIQLNNNVNNNLNKEKLIKSNNNKLLNLNNNNKNNNNNNINNNNNLISKNGILNNIIKNENQNKILKGNNKNNSNSKLDVSKKSISKENVNYLVSGSIAGAISRSATAGFERLTIIQQVQGMSQNLSQGYVGCIAAMKEMVKREGFKSIWKGNGANIVKVSPNSGIRFLTYEFCKKHFLDNSSNHPSSSSIENGIDGNGVGCGSGSEMKMTVPQTMFSGAMAGLTSTFFTYPLDVVRIRLSLQGSCSNDYAAHRYNGITHSFFKIHKDEGVKGLYKGLGTSIASIVPWVSISFATYEGFKIICKKMILNYQISSSSLSTTTTTPSSINNNNNNNNKNNNSFIYENELGENGINLTNTSGCSTMASTMPSSLLINSVASDENELKKGVNMICDFVCGALSGAVTMTVCYPLDVLRRRMMIQGIGGNKVLYKNGWDATKKILSNEGLVAFYHGIIPAYFKVVPTVAISFAVYEICKDLGSNKYQQK.

The segment covering Met1–Thr14 has biased composition (basic and acidic residues). The segment at Met1–Thr29 is disordered. Over Met1 to Asn132 the chain is Mitochondrial intermembrane. Positions Glu15–Thr29 are enriched in polar residues. Solcar repeat units follow at residues Lys130–His220, Met253–Ile345, and Val430–Leu519. Residues Val133–Phe153 form a helical membrane-spanning segment. The Mitochondrial matrix portion of the chain corresponds to Glu154 to Glu187. The helical transmembrane segment at Gly188–Gly208 threads the bilayer. Topologically, residues Ile209–Thr258 are mitochondrial intermembrane. Residues Met259 to Val279 traverse the membrane as a helical segment. The Mitochondrial matrix segment spans residues Arg280–Ser324. A helical membrane pass occupies residues Ile325–Ile345. The Mitochondrial intermembrane segment spans residues Cys346–Asp435. Residues Phe436 to Leu456 form a helical membrane-spanning segment. Residues Arg457–Gly487 lie on the Mitochondrial matrix side of the membrane. Residues Leu488–Ile508 form a helical membrane-spanning segment. Residues Ser509–Lys527 lie on the Mitochondrial intermembrane side of the membrane.

The protein belongs to the mitochondrial carrier (TC 2.A.29) family.

The protein resides in the mitochondrion inner membrane. In terms of biological role, mitochondrial solute carriers shuttle metabolites, nucleotides, and cofactors through the mitochondrial inner membrane. This Dictyostelium discoideum (Social amoeba) protein is Mitochondrial substrate carrier family protein V (mcfV).